Reading from the N-terminus, the 125-residue chain is Histone H2A (125 aa).

Residues methionine 1 to serine 18 show a composition bias toward basic residues. Residues methionine 1–alanine 21 form a disordered region. Serine 2 is modified (N-acetylserine). Residue serine 2 is modified to Phosphoserine. A Glycyl lysine isopeptide (Lys-Gly) (interchain with G-Cter in ubiquitin) cross-link involves residue lysine 119.

The protein belongs to the histone H2A family. As to quaternary structure, the nucleosome is a histone octamer containing two molecules each of H2A, H2B, H3 and H4 assembled in one H3-H4 heterotetramer and two H2A-H2B heterodimers. The octamer wraps approximately 147 bp of DNA. In terms of processing, monoubiquitination of Lys-119 gives a specific tag for epigenetic transcriptional repression. Post-translationally, phosphorylation on Ser-2 is enhanced during mitosis. Phosphorylation on Ser-2 directly represses transcription.

It localises to the nucleus. The protein localises to the chromosome. Its function is as follows. Core component of nucleosome. Nucleosomes wrap and compact DNA into chromatin, limiting DNA accessibility to the cellular machineries which require DNA as a template. Histones thereby play a central role in transcription regulation, DNA repair, DNA replication and chromosomal stability. DNA accessibility is regulated via a complex set of post-translational modifications of histones, also called histone code, and nucleosome remodeling. In Chironomus thummi thummi (Midge), this protein is Histone H2A.